The primary structure comprises 178 residues: Chorion class high-cysteine HCB protein 13 (178 aa).

The first 21 residues, 1–21, serve as a signal peptide directing secretion; that stretch reads MAAKLILFVCAIALVAQSVLG. A left arm region spans residues 22 to 46; the sequence is TGCGCCCRGCGCGCGGCGSRCCDRF. Residues 47–110 form a central domain region; sequence CLCSNSAAPT…GDGCVGITQS (64 aa). The right arm (Gly-rich tandem repeats) stretch occupies residues 111-178; sequence CGGCGCGCGG…GCGCGGCGCC (68 aa).

The protein belongs to the chorion protein family.

In terms of biological role, this protein is one of many from the eggshell of the silk moth. This chain is Chorion class high-cysteine HCB protein 13, found in Bombyx mori (Silk moth).